The primary structure comprises 282 residues: 2-dehydro-3-deoxyphosphooctonate aldolase (282 aa).

It belongs to the KdsA family.

The protein localises to the cytoplasm. The enzyme catalyses D-arabinose 5-phosphate + phosphoenolpyruvate + H2O = 3-deoxy-alpha-D-manno-2-octulosonate-8-phosphate + phosphate. Its pathway is carbohydrate biosynthesis; 3-deoxy-D-manno-octulosonate biosynthesis; 3-deoxy-D-manno-octulosonate from D-ribulose 5-phosphate: step 2/3. It participates in bacterial outer membrane biogenesis; lipopolysaccharide biosynthesis. In Shewanella baltica (strain OS223), this protein is 2-dehydro-3-deoxyphosphooctonate aldolase.